A 139-amino-acid polypeptide reads, in one-letter code: Histone H3 (139 aa).

Residues 1-48 (MARTKSTVIARKVTGGKAPRKQIGSKAARKSAAPSNTSGGVKKPHRYK) form a disordered region. Position 5 is an N6,N6,N6-trimethyllysine; alternate (lysine 5). The residue at position 5 (lysine 5) is an N6,N6-dimethyllysine; alternate. Lysine 5 and lysine 12 each carry N6-methyllysine; alternate. N6-acetyllysine; alternate occurs at positions 12, 17, 21, 26, 30, and 42. At lysine 17 the chain carries N6,N6-dimethyllysine; alternate. 4 positions are modified to N6-methyllysine; alternate: lysine 21, lysine 26, lysine 30, and lysine 42. N6,N6,N6-trimethyllysine; alternate is present on residues lysine 30 and lysine 42. 2 positions are modified to N6,N6-dimethyllysine; alternate: lysine 30 and lysine 42. Lysine 62 and lysine 70 each carry N6-acetyllysine. At lysine 85 the chain carries N6,N6,N6-trimethyllysine; alternate. Lysine 85 carries the N6,N6-dimethyllysine; alternate modification. An N6-methyllysine; alternate modification is found at lysine 85.

Belongs to the histone H3 family. As to quaternary structure, the nucleosome is a histone octamer containing two molecules each of H2A, H2B, H3 and H4 assembled in one H3-H4 heterotetramer and two H2A-H2B heterodimers. The octamer wraps approximately 147 bp of DNA. In terms of processing, mono-, di- and trimethylated by the COMPASS complex to form H3K4me1/2/3. H3K4me activates gene expression by regulating transcription elongation and plays a role in telomere length maintenance. H3K4me enrichment correlates with transcription levels, and occurs in a 5' to 3' gradient with H3K4me3 enrichment at the 5'-end of genes, shifting to H3K4me2 and then H3K4me1. Methylated by SET2 to form H3K36me. H3K36me represses gene expression. Methylated by DOT1 to form H3K79me. H3K79me is required for association of SIR proteins with telomeric regions and for telomeric silencing. The COMPASS-mediated formation of H3K4me2/3 and the DOT1-mediated formation of H3K79me require H2BK123ub1. Post-translationally, acetylation of histone H3 leads to transcriptional activation. Acetylated by GCN5 to form H3K14ac. H3K14ac can also be formed by ESA1. H3K56ac formation occurs predominantly in newly synthesized H3 molecules during G1, S and G2/M of the cell cycle and may be involved in DNA repair.

The protein localises to the nucleus. It localises to the chromosome. In terms of biological role, core component of nucleosome. Nucleosomes wrap and compact DNA into chromatin, limiting DNA accessibility to the cellular machineries which require DNA as a template. Histones thereby play a central role in transcription regulation, DNA repair, DNA replication and chromosomal stability. DNA accessibility is regulated via a complex set of post-translational modifications of histones, also called histone code, and nucleosome remodeling. This is Histone H3 (HHT1) from Yarrowia lipolytica (strain CLIB 122 / E 150) (Yeast).